Consider the following 412-residue polypeptide: Interferon-inducible GTPase 5 (412 aa).

The IRG-type G domain occupies 51–234 (TRLEVGVTGE…PMLVTTWEHD (184 aa)). GTP-binding positions include 60–67 (ESGAGKSS), 85–89 (TGVVE), and 215–217 (SNL). 2 positions are modified to phosphoserine: S246 and S303.

This sequence belongs to the TRAFAC class dynamin-like GTPase superfamily. IRG family. As to quaternary structure, interacts with PLIN2/ADRP and COX4I1/COXIV. In terms of tissue distribution, expressed in spermatozoa tails from the testis and epididymis, where it may be a component of the fibrous sheath (at protein level).

The protein localises to the cell projection. It is found in the cilium. Its subcellular location is the flagellum. It localises to the lipid droplet. The enzyme catalyses GTP + H2O = GDP + phosphate + H(+). In terms of biological role, required for sperm motility and therefore male fertility, via positive regulation of spermatozoa fibrous sheath formation. This Mus musculus (Mouse) protein is Interferon-inducible GTPase 5.